Here is a 356-residue protein sequence, read N- to C-terminus: MDKYLIKMPTKTNLNGDQKPAALKGTPKTIDKQKEKNTPTEKQKQEDDYVEKENTPKLRNAQIAKPASKRKNQDTPTEVKDIKNEEDGENPPKRRSARLTRSTRSMAEEGTPSPEKEKPEKLPFIKYKGAIKYYTENHEIAASADDVIQWIDKQTTLDVVPMAFDMEWPFSFQTGPGKSSVIQVCVDERCCYVYQLSKLKKLPAALVALLNHPKVRLHGVNIKADFRKLQRDFPEVSADPLIEKCVDLGVWCNEICETGGRWSLERLANFIAKKAMDKSKKVRMSKWHVIPLDENQLMYAAIDVYIGQVIYRDLEQREKVKLQNEANFKEQNGDAAFKAVKALGETFLDKITQVTI.

The tract at residues 1–120 (MDKYLIKMPT…TPSPEKEKPE (120 aa)) is disordered. Basic and acidic residues-rich tracts occupy residues 29-56 (TIDK…ENTP) and 71-85 (KNQD…IKNE). Positions 99–113 (LTRSTRSMAEEGTPS) are enriched in low complexity. Phosphoserine is present on residues S105 and S113. A 3'-5' exonuclease domain is found at 155–316 (TTLDVVPMAF…GQVIYRDLEQ (162 aa)). Positions 165, 167, and 303 each coordinate Mg(2+).

It belongs to the WRNexo family.

It localises to the nucleus. Has exonuclease activity on both single-stranded and duplex templates bearing overhangs, but not blunt ended duplex DNA, and cleaves in a 3'-5' direction. Essential for the formation of DNA replication focal centers. Has an important role in maintaining genome stability. The sequence is that of 3'-5' exonuclease from Drosophila willistoni (Fruit fly).